Consider the following 865-residue polypeptide: DNA-directed RNA polymerase subunit Rpo1N (865 aa).

Residues cysteine 60, cysteine 63, cysteine 70, histidine 73, cysteine 100, cysteine 103, cysteine 146, and cysteine 149 each contribute to the Zn(2+) site. 3 residues coordinate Mg(2+): aspartate 451, aspartate 453, and aspartate 455. Residues 500–531 (EHTSSQGKRLFSVRSRPPDPQEGRAPPPDREG) form a disordered region. A compositionally biased stretch (basic and acidic residues) spans 515-531 (RPPDPQEGRAPPPDREG).

Belongs to the RNA polymerase beta' chain family. In terms of assembly, part of the RNA polymerase complex. Mg(2+) serves as cofactor. The cofactor is Zn(2+).

The protein localises to the cytoplasm. It carries out the reaction RNA(n) + a ribonucleoside 5'-triphosphate = RNA(n+1) + diphosphate. Functionally, DNA-dependent RNA polymerase (RNAP) catalyzes the transcription of DNA into RNA using the four ribonucleoside triphosphates as substrates. Forms the clamp head domain. The polypeptide is DNA-directed RNA polymerase subunit Rpo1N (Methanothermobacter thermautotrophicus (strain Winter) (Methanobacterium thermoautotrophicum)).